We begin with the raw amino-acid sequence, 346 residues long: Probable electron transfer flavoprotein subunit alpha, mitochondrial (346 aa).

Residue 285–313 (LYVAIGISGAIQHLAGMKESKMIIAINKD) coordinates FAD.

This sequence belongs to the ETF alpha-subunit/FixB family. Heterodimer of an alpha and a beta subunit. The cofactor is FAD.

Its subcellular location is the mitochondrion matrix. In terms of biological role, the electron transfer flavoprotein serves as a specific electron acceptor for several dehydrogenases, including five acyl-CoA dehydrogenases, glutaryl-CoA and sarcosine dehydrogenase. It transfers the electrons to the main mitochondrial respiratory chain via ETF-ubiquinone oxidoreductase (ETF dehydrogenase). In Cryptococcus neoformans var. neoformans serotype D (strain B-3501A) (Filobasidiella neoformans), this protein is Probable electron transfer flavoprotein subunit alpha, mitochondrial (ETF1).